Consider the following 285-residue polypeptide: Tropomyosin-2 (285 aa).

Residues 1-277 (MDAIKKKMQA…KDIGDDLDTA (277 aa)) are a coiled coil. Residues 103-133 (EERLATATAKLSEASQAADESERARKVLENR) form a disordered region. The span at 122–133 (ESERARKVLENR) shows a compositional bias: basic and acidic residues.

The protein belongs to the tropomyosin family. In terms of assembly, homodimer.

Functionally, tropomyosin, in association with the troponin complex, plays a central role in the calcium dependent regulation of muscle contraction. This is Tropomyosin-2 from Bombyx mori (Silk moth).